Reading from the N-terminus, the 80-residue chain is Cortexin-3 (80 aa).

The chain crosses the membrane as a helical span at residues 28-48 (TTFVFVILLFIFLGILIVRCF).

This sequence belongs to the cortexin family.

It localises to the membrane. The sequence is that of Cortexin-3 (Ctxn3) from Mus musculus (Mouse).